The chain runs to 122 residues: Small ribosomal subunit protein uS13 (122 aa).

Residues proline 97 to lysine 122 are disordered. The segment covering glutamine 101–lysine 122 has biased composition (basic residues).

Belongs to the universal ribosomal protein uS13 family. In terms of assembly, part of the 30S ribosomal subunit. Forms a loose heterodimer with protein S19. Forms two bridges to the 50S subunit in the 70S ribosome.

In terms of biological role, located at the top of the head of the 30S subunit, it contacts several helices of the 16S rRNA. In the 70S ribosome it contacts the 23S rRNA (bridge B1a) and protein L5 of the 50S subunit (bridge B1b), connecting the 2 subunits; these bridges are implicated in subunit movement. Contacts the tRNAs in the A and P-sites. This chain is Small ribosomal subunit protein uS13, found in Thermosipho melanesiensis (strain DSM 12029 / CIP 104789 / BI429).